A 513-amino-acid chain; its full sequence is Ribonuclease Y (513 aa).

A helical membrane pass occupies residues 6–26 (YIIIAVVIIIICVILGLYVVD). In terms of domain architecture, KH spans 203 to 288 (TVHVVNLPND…EMVEKAKKEV (86 aa)). One can recognise an HD domain in the interval 329 to 422 (VLKHSIEVSH…VQAADAISAA (94 aa)).

This sequence belongs to the RNase Y family.

The protein localises to the cell membrane. Its function is as follows. Endoribonuclease that initiates mRNA decay. This chain is Ribonuclease Y, found in Clostridium botulinum (strain Langeland / NCTC 10281 / Type F).